Here is a 160-residue protein sequence, read N- to C-terminus: Ribosomal RNA large subunit methyltransferase H (160 aa).

S-adenosyl-L-methionine-binding positions include Leu76, Gly108, and 127–132 (LGKMTW).

This sequence belongs to the RNA methyltransferase RlmH family. Homodimer.

It is found in the cytoplasm. It catalyses the reaction pseudouridine(1915) in 23S rRNA + S-adenosyl-L-methionine = N(3)-methylpseudouridine(1915) in 23S rRNA + S-adenosyl-L-homocysteine + H(+). Functionally, specifically methylates the pseudouridine at position 1915 (m3Psi1915) in 23S rRNA. The chain is Ribosomal RNA large subunit methyltransferase H from Sinorhizobium medicae (strain WSM419) (Ensifer medicae).